Reading from the N-terminus, the 371-residue chain is Peptide chain release factor 2 (371 aa).

At Gln253 the chain carries N5-methylglutamine.

This sequence belongs to the prokaryotic/mitochondrial release factor family. Methylated by PrmC. Methylation increases the termination efficiency of RF2.

It localises to the cytoplasm. In terms of biological role, peptide chain release factor 2 directs the termination of translation in response to the peptide chain termination codons UGA and UAA. The sequence is that of Peptide chain release factor 2 from Mycobacterium sp. (strain KMS).